The following is a 461-amino-acid chain: Phosphoenolpyruvate carboxylase (461 aa).

This sequence belongs to the PEPCase type 2 family. As to quaternary structure, homotetramer. It depends on Mg(2+) as a cofactor.

It carries out the reaction oxaloacetate + phosphate = phosphoenolpyruvate + hydrogencarbonate. Its function is as follows. Catalyzes the irreversible beta-carboxylation of phosphoenolpyruvate (PEP) to form oxaloacetate (OAA), a four-carbon dicarboxylic acid source for the tricarboxylic acid cycle. This Pyrobaculum islandicum (strain DSM 4184 / JCM 9189 / GEO3) protein is Phosphoenolpyruvate carboxylase.